A 266-amino-acid polypeptide reads, in one-letter code: 4-hydroxy-tetrahydrodipicolinate reductase (266 aa).

Gly10–Met15 contributes to the NAD(+) binding site. Lys38 lines the NADP(+) pocket. Residues Gly99–Thr101 and Ala125–Phe128 contribute to the NAD(+) site. His155 acts as the Proton donor/acceptor in catalysis. His156 is a (S)-2,3,4,5-tetrahydrodipicolinate binding site. Residue Lys159 is the Proton donor of the active site. Residue Gly165–Thr166 participates in (S)-2,3,4,5-tetrahydrodipicolinate binding.

This sequence belongs to the DapB family.

Its subcellular location is the cytoplasm. It catalyses the reaction (S)-2,3,4,5-tetrahydrodipicolinate + NAD(+) + H2O = (2S,4S)-4-hydroxy-2,3,4,5-tetrahydrodipicolinate + NADH + H(+). It carries out the reaction (S)-2,3,4,5-tetrahydrodipicolinate + NADP(+) + H2O = (2S,4S)-4-hydroxy-2,3,4,5-tetrahydrodipicolinate + NADPH + H(+). The protein operates within amino-acid biosynthesis; L-lysine biosynthesis via DAP pathway; (S)-tetrahydrodipicolinate from L-aspartate: step 4/4. Functionally, catalyzes the conversion of 4-hydroxy-tetrahydrodipicolinate (HTPA) to tetrahydrodipicolinate. This Bacillus cereus (strain ZK / E33L) protein is 4-hydroxy-tetrahydrodipicolinate reductase.